A 177-amino-acid chain; its full sequence is Large ribosomal subunit protein uL6 (177 aa).

This sequence belongs to the universal ribosomal protein uL6 family. As to quaternary structure, part of the 50S ribosomal subunit.

Its function is as follows. This protein binds to the 23S rRNA, and is important in its secondary structure. It is located near the subunit interface in the base of the L7/L12 stalk, and near the tRNA binding site of the peptidyltransferase center. The chain is Large ribosomal subunit protein uL6 from Variovorax paradoxus (strain S110).